The chain runs to 509 residues: ATP synthase subunit alpha 1 (509 aa).

Gly172 to Thr179 is a binding site for ATP.

Belongs to the ATPase alpha/beta chains family. F-type ATPases have 2 components, CF(1) - the catalytic core - and CF(0) - the membrane proton channel. CF(1) has five subunits: alpha(3), beta(3), gamma(1), delta(1), epsilon(1). CF(0) has four main subunits: a(1), b(1), b'(1) and c(9-12).

The protein localises to the cell inner membrane. It catalyses the reaction ATP + H2O + 4 H(+)(in) = ADP + phosphate + 5 H(+)(out). Its function is as follows. Produces ATP from ADP in the presence of a proton gradient across the membrane. The alpha chain is a regulatory subunit. In Dinoroseobacter shibae (strain DSM 16493 / NCIMB 14021 / DFL 12), this protein is ATP synthase subunit alpha 1.